The following is a 524-amino-acid chain: Ribonuclease Y (524 aa).

A helical transmembrane segment spans residues 2–22; that stretch reads GIVINLFLIIAASIVFFVVGF. The region spanning 214–299 is the KH domain; sequence ALSVVHIQSD…KAYQDAKKEI (86 aa). In terms of domain architecture, HD spans 340 to 432; that stretch reads LLQHSREVAM…VDAANIVSLS (93 aa).

This sequence belongs to the RNase Y family.

Its subcellular location is the cell membrane. Functionally, endoribonuclease that initiates mRNA decay. This Chlorobaculum tepidum (strain ATCC 49652 / DSM 12025 / NBRC 103806 / TLS) (Chlorobium tepidum) protein is Ribonuclease Y.